Consider the following 346-residue polypeptide: MIELKNVSKVFTTKKGNVEALKSTSLQVKKGEVFGIIGYSGAGKSTLIRCVNLLEKPTTGNIIVNEQDLTTLSTKELAKARQKIGMIFQGFNLLKTVTVYENIALPLRLAGVPKLEIEKRVEKYLRIVDLFNRKDAYPSELSGGQKQRVAIARALSHEPEVLLSDEATSALDPETTDSILDLLLKINEEIGITILLITHEMNVIQRICDRVAVMEHGAVVESGTVKDIFTNPQHVTTKKFVNSAFAAKIPAEVQKELQRTGEIVTLSFIGNSSGEPALAVATKRFQVYPNILSGNITQLKHEAYGKLVIHMQGEQNEINHALSFLQEQGIIVEGGRTDYGKQVLFG.

One can recognise an ABC transporter domain in the interval 2–241 (IELKNVSKVF…PQHVTTKKFV (240 aa)). 38–45 (GYSGAGKS) is an ATP binding site.

It belongs to the ABC transporter superfamily. Methionine importer (TC 3.A.1.24) family. As to quaternary structure, the complex is composed of two ATP-binding proteins (MetN), two transmembrane proteins (MetI) and a solute-binding protein (MetQ).

The protein resides in the cell membrane. It carries out the reaction L-methionine(out) + ATP + H2O = L-methionine(in) + ADP + phosphate + H(+). It catalyses the reaction D-methionine(out) + ATP + H2O = D-methionine(in) + ADP + phosphate + H(+). In terms of biological role, part of the ABC transporter complex MetNIQ involved in methionine import. Responsible for energy coupling to the transport system. This is Methionine import ATP-binding protein MetN 1 from Bacillus anthracis.